Here is a 346-residue protein sequence, read N- to C-terminus: Fe(3+) ions import ATP-binding protein FbpC 3 (346 aa).

The region spanning 5–235 is the ABC transporter domain; the sequence is LEVDGVDKSF…PIDVATAEFI (231 aa). An ATP-binding site is contributed by 37 to 44; sequence GPSGCGKT.

The protein belongs to the ABC transporter superfamily. Fe(3+) ion importer (TC 3.A.1.10) family. In terms of assembly, the complex is composed of two ATP-binding proteins (FbpC), two transmembrane proteins (FbpB) and a solute-binding protein (FbpA).

Its subcellular location is the cell membrane. It carries out the reaction Fe(3+)(out) + ATP + H2O = Fe(3+)(in) + ADP + phosphate + H(+). In terms of biological role, part of the ABC transporter complex FbpABC involved in Fe(3+) ions import. Responsible for energy coupling to the transport system. The sequence is that of Fe(3+) ions import ATP-binding protein FbpC 3 from Rhodococcus jostii (strain RHA1).